A 201-amino-acid chain; its full sequence is 3-isopropylmalate dehydratase small subunit (201 aa).

Belongs to the LeuD family. LeuD type 1 subfamily. In terms of assembly, heterodimer of LeuC and LeuD.

The enzyme catalyses (2R,3S)-3-isopropylmalate = (2S)-2-isopropylmalate. It participates in amino-acid biosynthesis; L-leucine biosynthesis; L-leucine from 3-methyl-2-oxobutanoate: step 2/4. Its function is as follows. Catalyzes the isomerization between 2-isopropylmalate and 3-isopropylmalate, via the formation of 2-isopropylmaleate. This is 3-isopropylmalate dehydratase small subunit from Methylorubrum populi (strain ATCC BAA-705 / NCIMB 13946 / BJ001) (Methylobacterium populi).